Reading from the N-terminus, the 186-residue chain is Tetratricopeptide repeat protein 36 (186 aa).

TPR repeat units lie at residues 48–81 (SKALELQGVRAAEAGDLHTALEKFGQAISLLPDR), 83–115 (SAYNNRAQARRLQGDVAGALEDLERAVTLSGGR), and 120–153 (RQSFVQSGLLARFQGRDDDARRDFEKAARLGSPF).

Belongs to the TTC36 family.

The chain is Tetratricopeptide repeat protein 36 (Ttc36) from Mus musculus (Mouse).